Reading from the N-terminus, the 584-residue chain is Arginine--tRNA ligase (584 aa).

A 'HIGH' region motif is present at residues 125-135 (PNIAKEMHVGH).

This sequence belongs to the class-I aminoacyl-tRNA synthetase family. In terms of assembly, monomer.

Its subcellular location is the cytoplasm. The catalysed reaction is tRNA(Arg) + L-arginine + ATP = L-arginyl-tRNA(Arg) + AMP + diphosphate. This Thermosynechococcus vestitus (strain NIES-2133 / IAM M-273 / BP-1) protein is Arginine--tRNA ligase.